Consider the following 239-residue polypeptide: Putative ABC transporter ATP-binding protein BR1368/BS1330_I1363 (239 aa).

The region spanning 5-234 (LSLDRVSVSR…EQVHLHYVEA (230 aa)) is the ABC transporter domain. 37-44 (GDNGVGKT) contributes to the ATP binding site.

It belongs to the ABC transporter superfamily.

It localises to the cell inner membrane. Probably part of an ABC transporter complex. Responsible for energy coupling to the transport system. This Brucella suis biovar 1 (strain 1330) protein is Putative ABC transporter ATP-binding protein BR1368/BS1330_I1363.